Reading from the N-terminus, the 431-residue chain is Chaperone SurA (431 aa).

Residues 1–20 form the signal peptide; sequence MKNWRTLILGLALSASTAFA. PpiC domains are found at residues 171-272 and 282-382; these read NDEL…KVND and VTET…QLLD.

Its subcellular location is the periplasm. The enzyme catalyses [protein]-peptidylproline (omega=180) = [protein]-peptidylproline (omega=0). In terms of biological role, chaperone involved in the correct folding and assembly of outer membrane proteins. Recognizes specific patterns of aromatic residues and the orientation of their side chains, which are found more frequently in integral outer membrane proteins. May act in both early periplasmic and late outer membrane-associated steps of protein maturation. The sequence is that of Chaperone SurA from Pectobacterium atrosepticum (strain SCRI 1043 / ATCC BAA-672) (Erwinia carotovora subsp. atroseptica).